The primary structure comprises 351 residues: Pentatricopeptide repeat-containing protein At3g56030, mitochondrial (351 aa).

The transit peptide at 1–41 directs the protein to the mitochondrion; that stretch reads MFRLKPLISVDLNQTMSLLRRFVKEANNSRFLLQSISGRSF. 4 PPR repeats span residues 124–158, 159–193, 194–224, and 232–266; these read RKHS…EFGL, STCV…AIPV, DVTS…MEEE, and DTRT…GLSV.

The protein belongs to the PPR family. P subfamily.

It is found in the mitochondrion. The polypeptide is Pentatricopeptide repeat-containing protein At3g56030, mitochondrial (Arabidopsis thaliana (Mouse-ear cress)).